The chain runs to 111 residues: Shuttling pre-60S factor C23B6.02c (111 aa).

Composition is skewed to basic residues over residues 1 to 12 and 59 to 73; these read MAKKQSIRSRNF and SKKK…KKAK. Disordered regions lie at residues 1-25 and 47-111; these read MAKK…DSST and ALRS…QGDE. A compositionally biased stretch (basic and acidic residues) spans 83–111; sequence QAREERLDTKISKSLQKQEKLKARKQGDE.

This sequence belongs to the ECM1 family. In terms of assembly, associates with the pre-60S ribosomal particle and the nucleopore complex.

The protein resides in the nucleus. Its subcellular location is the nucleolus. It is found in the cytoplasm. Functionally, pre-ribosomal factor involved in 60S ribosomal protein subunit export from the nucleus. The protein is Shuttling pre-60S factor C23B6.02c of Schizosaccharomyces pombe (strain 972 / ATCC 24843) (Fission yeast).